The following is a 66-amino-acid chain: Phylloseptin-S6 (66 aa).

Positions 1 to 22 (MAFLKKSLFLVLFLGLVSLSIC) are cleaved as a signal peptide. The propeptide occupies 23–46 (EEEKRETEEEEHDQEEDDKSEEKR). The interval 25-44 (EKRETEEEEHDQEEDDKSEE) is disordered. The segment covering 30 to 41 (EEEEHDQEEDDK) has biased composition (acidic residues). Residue leucine 65 is modified to Leucine amide.

It belongs to the frog skin active peptide (FSAP) family. Phylloseptin subfamily. In terms of tissue distribution, expressed by the skin glands.

Its subcellular location is the secreted. It is found in the target cell membrane. In terms of biological role, antimicrobial peptide with high activity against Gram-positive bacteria, low activity against Gram-negative bacteria, and moderate activity against fungi. Acts by causing bacterial membrane disruption inducing leakage of the intracellular content followed by cell death. It adopts an alpha-helical amphipathic structure in membrane environments. Also shows highly potent antiparasitic activity against Leishmania species. Shows moderate hemolytic activity on human erythrocytes. Is also active on human monocytes. In Phyllomedusa sauvagei (Sauvage's leaf frog), this protein is Phylloseptin-S6.